A 128-amino-acid polypeptide reads, in one-letter code: Small ribosomal subunit protein uS11 (128 aa).

This sequence belongs to the universal ribosomal protein uS11 family. Part of the 30S ribosomal subunit. Interacts with proteins S7 and S18. Binds to IF-3.

Located on the platform of the 30S subunit, it bridges several disparate RNA helices of the 16S rRNA. Forms part of the Shine-Dalgarno cleft in the 70S ribosome. This is Small ribosomal subunit protein uS11 from Solidesulfovibrio magneticus (strain ATCC 700980 / DSM 13731 / RS-1) (Desulfovibrio magneticus).